Reading from the N-terminus, the 336-residue chain is Mitochondrial fission regulator 2 (336 aa).

The stretch at 139 to 166 (QPDALLKISALEEELQRLRAQIATIITA) forms a coiled coil. The interval 296–336 (HRQRDDSFGKENHSAEPSPFSSPDTPRIFQHTRRSQGRIHL) is disordered. Residues 297–309 (RQRDDSFGKENHS) are compositionally biased toward basic and acidic residues. Basic residues predominate over residues 325 to 336 (QHTRRSQGRIHL).

It belongs to the MTFR1 family.

The protein localises to the mitochondrion. In terms of biological role, may play a role in mitochondrial aerobic respiration. Can also promote mitochondrial fission. This Danio rerio (Zebrafish) protein is Mitochondrial fission regulator 2 (mtfr2).